Here is a 108-residue protein sequence, read N- to C-terminus: Protein SMALL AUXIN UP-REGULATED RNA 51 (108 aa).

The protein belongs to the ARG7 family. Expressed in organ primordia. Hardly observed in leaves.

Its subcellular location is the cell membrane. In terms of biological role, provide a mechanistic link between auxin and plasma membrane H(+)-ATPases (PM H(+)-ATPases, e.g. AHA1 and AHA2), and triggers PM H(+)-ATPases activity by promoting phosphorylation of their C-terminal autoinhibitory domain as a result of PP2C-D subfamily of type 2C phosphatases inhibition, thus leading to the acidification of the apoplast and the facilitation of solutes and water uptake to drive cell expansion. Triggers plant growth probably by promoting cell elongation. Regulates branch angles and bending. The chain is Protein SMALL AUXIN UP-REGULATED RNA 51 from Arabidopsis thaliana (Mouse-ear cress).